The following is a 402-amino-acid chain: Beta-ketoacyl-[acyl-carrier-protein] synthase III B, chloroplastic (402 aa).

Active-site residues include C178, H328, and N358.

Belongs to the thiolase-like superfamily. FabH family.

The protein resides in the plastid. It localises to the chloroplast. It carries out the reaction malonyl-[ACP] + acetyl-CoA + H(+) = 3-oxobutanoyl-[ACP] + CO2 + CoA. It functions in the pathway lipid metabolism; fatty acid biosynthesis. In terms of biological role, catalyzes the condensation reaction of fatty acid synthesis by the addition to an acyl acceptor of two carbons from malonyl-ACP. KAS III catalyzes the first condensation reaction which initiates fatty acid synthesis and may therefore play a role in governing the total rate of fatty acid production. Possesses both acetoacetyl-ACP synthase and acetyl transacylase activities. This is Beta-ketoacyl-[acyl-carrier-protein] synthase III B, chloroplastic (KAS3B) from Cuphea wrightii (Wright's waxweed).